A 351-amino-acid polypeptide reads, in one-letter code: Selenide, water dikinase (351 aa).

Residue cysteine 20 is part of the active site. ATP-binding positions include lysine 23 and 51–53 (TKD). Residue aspartate 54 coordinates Mg(2+). Residues aspartate 71, aspartate 94, and 142 to 144 (GHS) each bind ATP. Aspartate 94 is a Mg(2+) binding site. Aspartate 230 is a binding site for Mg(2+).

It belongs to the selenophosphate synthase 1 family. Class I subfamily. As to quaternary structure, homodimer. It depends on Mg(2+) as a cofactor.

The enzyme catalyses hydrogenselenide + ATP + H2O = selenophosphate + AMP + phosphate + 2 H(+). In terms of biological role, synthesizes selenophosphate from selenide and ATP. The chain is Selenide, water dikinase from Pasteurella multocida (strain Pm70).